We begin with the raw amino-acid sequence, 436 residues long: GTPase Der (436 aa).

2 consecutive EngA-type G domains span residues 4–167 and 176–351; these read PVIA…PKIE and IRFS…ESHS. Residues 10–17, 57–61, 119–122, 182–189, 229–233, and 294–297 contribute to the GTP site; these read GRPNVGKS, DTGGI, NKVD, DTAGM, and NKWD. The region spanning 352 to 436 is the KH-like domain; sequence IRVQTNVLND…PIHIIARARD (85 aa).

The protein belongs to the TRAFAC class TrmE-Era-EngA-EngB-Septin-like GTPase superfamily. EngA (Der) GTPase family. Associates with the 50S ribosomal subunit.

Functionally, GTPase that plays an essential role in the late steps of ribosome biogenesis. The sequence is that of GTPase Der from Bacillus mycoides (strain KBAB4) (Bacillus weihenstephanensis).